The chain runs to 149 residues: Ribonuclease-like 3 (149 aa).

Residues 1 to 22 (MGIHQCTAVVLLLLCASLSTYG) form the signal peptide. Gln-23 carries the pyrrolidone carboxylic acid modification. Catalysis depends on His-38, which acts as the Proton acceptor. 3 cysteine pairs are disulfide-bonded: Cys-48–Cys-109, Cys-66–Cys-120, and Cys-84–Cys-135. 67-71 (KEVNT) contacts substrate. His-142 functions as the Proton donor in the catalytic mechanism.

It belongs to the pancreatic ribonuclease family. In terms of processing, cleavage between Arg-55 and Arg-56 is catalyzed by a membrane-localized Gram-negative bacterium protease (OmpT in E.coli). The excised fragment is then transported to the bacterium cytosol for cleavage of the disulfide bridge linking Cys-48 and Cys-109, thus separating the N-terminal and LF-ZF3. LF-ZF3 but not the N-terminal peptide possesses bactericidal activity. Strongly expressed in the adult liver and gut, and weakly in the heart and testis.

It is found in the secreted. Functionally, ribonuclease. Angiogenic. Plays a role in host defense. Exhibits strong antibacterial activity against Gram-negative bacteria but mild antibacterial activity against Gram-positive bacteria. The RNase activity is not required for the bactericidal activity. The protein is Ribonuclease-like 3 of Danio rerio (Zebrafish).